Here is a 291-residue protein sequence, read N- to C-terminus: Protein SpdB (291 aa).

Helical transmembrane passes span 24–44, 71–91, and 99–119; these read VVVI…LVVG, ITGV…AHAL, and WLAV…HGLW.

The protein resides in the cell membrane. Functionally, involved in plasmid transfer. This chain is Protein SpdB (spdB), found in Streptomyces lividans.